The sequence spans 471 residues: MPTNIYVTEEELKKQEKIMKEIAEENKGKNLYYHIETYGCQMNVHDSEKLAGMLEKMGYKYTENLEQADVLLFNTCAVREHAEIRVLGRVSQMKELKARNPNLIIGVSGCMMQEKNVVEAIKEKYSYIDIVFGTHNIYKFPQLLWEALNSQDIVIDIIEDTKNVIEELPVKRDSNLKAWVNIIYGCNNFCTYCIVPYTRGREKSRKPEDIIAEVKELAQKGYKEITLLGQNVNSYGKDLDEDITFAKLLYKLNDIEGIERIRFMTSHPKDISDELIYAMRDLDKVCEHLHLPVQAGSNKILKKMNRKYTKEHYLEIIDKVRSNIPDIAITTDIIVGFPGETEEDFLETLDLVERVRFDAAYTFIYSKRAGTVAANMPDQVDDAVKHERLERLIELQNKISLEKSAELRGKIVEVLIEGISKRDSNKLTSRTRTNKVVHFVGDESLIGKLANVKITETKAWTMQGELVEVIR.

In terms of domain architecture, MTTase N-terminal spans 31–149 (LYYHIETYGC…FPQLLWEALN (119 aa)). 6 residues coordinate [4Fe-4S] cluster: Cys-40, Cys-76, Cys-110, Cys-186, Cys-190, and Cys-193. The 231-residue stretch at 172 to 402 (RDSNLKAWVN…IELQNKISLE (231 aa)) folds into the Radical SAM core domain. One can recognise a TRAM domain in the interval 405–468 (AELRGKIVEV…AWTMQGELVE (64 aa)).

The protein belongs to the methylthiotransferase family. MiaB subfamily. As to quaternary structure, monomer. It depends on [4Fe-4S] cluster as a cofactor.

The protein resides in the cytoplasm. The enzyme catalyses N(6)-dimethylallyladenosine(37) in tRNA + (sulfur carrier)-SH + AH2 + 2 S-adenosyl-L-methionine = 2-methylsulfanyl-N(6)-dimethylallyladenosine(37) in tRNA + (sulfur carrier)-H + 5'-deoxyadenosine + L-methionine + A + S-adenosyl-L-homocysteine + 2 H(+). Catalyzes the methylthiolation of N6-(dimethylallyl)adenosine (i(6)A), leading to the formation of 2-methylthio-N6-(dimethylallyl)adenosine (ms(2)i(6)A) at position 37 in tRNAs that read codons beginning with uridine. In Thermoanaerobacter sp. (strain X514), this protein is tRNA-2-methylthio-N(6)-dimethylallyladenosine synthase.